A 262-amino-acid polypeptide reads, in one-letter code: Sperm microtubule inner protein 6 (262 aa).

It belongs to the SPMIP6 family. As to quaternary structure, microtubule inner protein component of sperm flagellar doublet microtubules. Interacts with alpha-tubulin.

The protein resides in the cytoplasm. It is found in the cytoskeleton. It localises to the nucleus. Its subcellular location is the mitochondrion. The protein localises to the flagellum axoneme. Its function is as follows. May participate in intramanchette transport and midpiece formation of the sperm tail. May play a potential role in somatic cell proliferation. The chain is Sperm microtubule inner protein 6 (SPMIP6) from Macaca fascicularis (Crab-eating macaque).